The sequence spans 589 residues: Phenylalanine--tRNA ligase beta subunit (589 aa).

A B5 domain is found at 302–377 (LEVREERISV…IAYGYNNIKK (76 aa)). D355, D361, E364, and D365 together coordinate Mg(2+).

Belongs to the phenylalanyl-tRNA synthetase beta subunit family. Type 2 subfamily. In terms of assembly, tetramer of two alpha and two beta subunits. Mg(2+) serves as cofactor.

The protein localises to the cytoplasm. The enzyme catalyses tRNA(Phe) + L-phenylalanine + ATP = L-phenylalanyl-tRNA(Phe) + AMP + diphosphate + H(+). This Drosophila melanogaster (Fruit fly) protein is Phenylalanine--tRNA ligase beta subunit.